A 784-amino-acid polypeptide reads, in one-letter code: Spindle pole body component alp4 (784 aa).

The protein belongs to the TUBGCP family. As to quaternary structure, part of the gamma-tubulin complex. Interacts with mcp6. Interacts with mto1. Interacts with mto2.

It is found in the cytoplasm. The protein resides in the cytoskeleton. The protein localises to the microtubule organizing center. Its subcellular location is the spindle pole body. Component of the gamma tubule complex that is required for the regulation of both interphase microtubules and mitotic bipolar spindles. This chain is Spindle pole body component alp4 (alp4), found in Schizosaccharomyces pombe (strain 972 / ATCC 24843) (Fission yeast).